Reading from the N-terminus, the 118-residue chain is Nucleoid-associated protein TM_0687 (118 aa).

This sequence belongs to the YbaB/EbfC family. In terms of assembly, homodimer.

Its subcellular location is the cytoplasm. The protein resides in the nucleoid. Functionally, binds to DNA and alters its conformation. May be involved in regulation of gene expression, nucleoid organization and DNA protection. In Thermotoga maritima (strain ATCC 43589 / DSM 3109 / JCM 10099 / NBRC 100826 / MSB8), this protein is Nucleoid-associated protein TM_0687.